A 269-amino-acid chain; its full sequence is Eukaryotic translation initiation factor 3 subunit G-1 (269 aa).

The RRM domain maps to 188–266 (AAIRISNLSE…LILSVEWSKP (79 aa)).

The protein belongs to the eIF-3 subunit G family. Component of the eukaryotic translation initiation factor 3 (eIF-3) complex. The eIF-3 complex interacts with pix.

It localises to the cytoplasm. Its function is as follows. RNA-binding component of the eukaryotic translation initiation factor 3 (eIF-3) complex, which is involved in protein synthesis of a specialized repertoire of mRNAs and, together with other initiation factors, stimulates binding of mRNA and methionyl-tRNAi to the 40S ribosome. The eIF-3 complex specifically targets and initiates translation of a subset of mRNAs involved in cell proliferation. This subunit can bind 18S rRNA. In Drosophila mojavensis (Fruit fly), this protein is Eukaryotic translation initiation factor 3 subunit G-1.